The sequence spans 822 residues: Fibroblast growth factor receptor 1 (822 aa).

Positions 1 to 21 (MWSWKCLLFWAVLVTATLCTA) are cleaved as a signal peptide. At 22–376 (RPSPTLPEQA…AVMTSPLYLE (355 aa)) the chain is on the extracellular side. The region spanning 25 to 119 (PTLPEQAQPW…DTTYFSVNVS (95 aa)) is the Ig-like C2-type 1 domain. Residues cysteine 55 and cysteine 101 are joined by a disulfide bond. N-linked (GlcNAc...) asparagine glycosylation is found at asparagine 77 and asparagine 117. The tract at residues 120-154 (DALPSSEDDDDDDDSSSEEKETDNTKPNRMPVAPY) is disordered. Residues 125–135 (SEDDDDDDDSS) are compositionally biased toward acidic residues. The segment covering 136 to 145 (SEEKETDNTK) has biased composition (basic and acidic residues). 2 consecutive Ig-like C2-type domains span residues 158–246 (PEKM…YQLD) and 255–357 (PILQ…AWLT). The tract at residues 160 to 177 (KMEKKLHAVPAAKTVKFK) is heparin-binding. A disulfide bridge connects residues cysteine 178 and cysteine 230. Asparagine 227, asparagine 240, asparagine 264, asparagine 296, asparagine 317, and asparagine 330 each carry an N-linked (GlcNAc...) asparagine glycan. Cysteines 277 and 341 form a disulfide. The helical transmembrane segment at 377-397 (IIIYCTGAFLISCMVGSVIVY) threads the bilayer. Topologically, residues 398-822 (KMKSGTKKSD…QLANGGLKRR (425 aa)) are cytoplasmic. Tyrosine 463 is subject to Phosphotyrosine; by autocatalysis. Residues 478–767 (LVLGKPLGEG…VALTSNQEYL (290 aa)) form the Protein kinase domain. Residues 484 to 490 (LGEGCFG), lysine 514, 562 to 564 (EYA), and asparagine 568 each bind ATP. A phosphotyrosine; by autocatalysis mark is found at tyrosine 583 and tyrosine 585. Residue aspartate 623 is the Proton acceptor of the active site. ATP is bound by residues arginine 627 and aspartate 641. A phosphotyrosine; by autocatalysis mark is found at tyrosine 653, tyrosine 654, tyrosine 730, and tyrosine 766. The segment covering 778 to 792 (PSFPDTRSSTCSSGE) has biased composition (polar residues). Residues 778-822 (PSFPDTRSSTCSSGEDSVFSHEPLPEEPCLPRHPAQLANGGLKRR) are disordered.

The protein belongs to the protein kinase superfamily. Tyr protein kinase family. Fibroblast growth factor receptor subfamily. As to quaternary structure, monomer. Homodimer after ligand binding. Interacts predominantly with FGF1 and FGF2, but can also interact with FGF3, FGF4, FGF5, FGF6, FGF8, FGF10, FGF19, FGF21, FGF22 and FGF23 (in vitro). Ligand specificity is determined by tissue-specific expression of isoforms, and differences in the third Ig-like domain are crucial for ligand specificity. Affinity for fibroblast growth factors (FGFs) is increased by heparan sulfate glycosaminoglycans that function as coreceptors. Likewise, KLB increases the affinity for FGF19, FGF21 and FGF23. Interacts (phosphorylated on Tyr-766) with PLCG1 (via SH2 domains). Interacts with FRS2. Interacts with RPS6KA1. Interacts (via C-terminus) with NEDD4 (via WW3 domain). Interacts with KL. Interacts with SHB (via SH2 domain). Interacts with GRB10. Interacts with ANOS1; this interaction does not interfere with FGF2-binding to FGFR1, but prevents binding of heparin-bound FGF2. Interacts with SOX2 and SOX3. Interacts with FLRT1, FLRT2 and FLRT3. Found in a ternary complex with FGF1 and ITGAV:ITGB3. Autophosphorylated. Binding of FGF family members together with heparan sulfate proteoglycan or heparin promotes receptor dimerization and autophosphorylation on tyrosine residues. Autophosphorylation occurs in trans between the two FGFR molecules present in the dimer and proceeds in a highly ordered manner. Initial autophosphorylation at Tyr-653 increases the kinase activity by a factor of 50 to 100. After this, Tyr-583 becomes phosphorylated, followed by phosphorylation of Tyr-463, Tyr-766, Tyr-583 and Tyr-585. In a third stage, Tyr-654 is autophosphorylated, resulting in a further tenfold increase of kinase activity. Phosphotyrosine residues provide docking sites for interacting proteins and so are crucial for FGFR1 function and its regulation. In terms of processing, ubiquitinated. FGFR1 is rapidly ubiquitinated by NEDD4 after autophosphorylation, leading to internalization and lysosomal degradation. CBL is recruited to activated FGFR1 via FRS2 and GRB2, and mediates ubiquitination and subsequent degradation of FGFR1. Post-translationally, N-glycosylated in the endoplasmic reticulum. The N-glycan chains undergo further maturation to an Endo H-resistant form in the Golgi apparatus. As to expression, detected in astrocytoma, neuroblastoma and adrenal cortex cell lines. Some isoforms are detected in foreskin fibroblast cell lines, however isoform 17, isoform 18 and isoform 19 are not detected in these cells.

It localises to the cell membrane. Its subcellular location is the nucleus. It is found in the cytoplasm. The protein resides in the cytosol. The protein localises to the cytoplasmic vesicle. It catalyses the reaction L-tyrosyl-[protein] + ATP = O-phospho-L-tyrosyl-[protein] + ADP + H(+). Present in an inactive conformation in the absence of bound ligand. Ligand binding leads to dimerization and activation by sequential autophosphorylation on tyrosine residues. Inhibited by ARQ 069; this compound maintains the kinase in an inactive conformation and inhibits autophosphorylation. Inhibited by PD173074. Its function is as follows. Tyrosine-protein kinase that acts as a cell-surface receptor for fibroblast growth factors and plays an essential role in the regulation of embryonic development, cell proliferation, differentiation and migration. Required for normal mesoderm patterning and correct axial organization during embryonic development, normal skeletogenesis and normal development of the gonadotropin-releasing hormone (GnRH) neuronal system. Phosphorylates PLCG1, FRS2, GAB1 and SHB. Ligand binding leads to the activation of several signaling cascades. Activation of PLCG1 leads to the production of the cellular signaling molecules diacylglycerol and inositol 1,4,5-trisphosphate. Phosphorylation of FRS2 triggers recruitment of GRB2, GAB1, PIK3R1 and SOS1, and mediates activation of RAS, MAPK1/ERK2, MAPK3/ERK1 and the MAP kinase signaling pathway, as well as of the AKT1 signaling pathway. Promotes phosphorylation of SHC1, STAT1 and PTPN11/SHP2. In the nucleus, enhances RPS6KA1 and CREB1 activity and contributes to the regulation of transcription. FGFR1 signaling is down-regulated by IL17RD/SEF, and by FGFR1 ubiquitination, internalization and degradation. The chain is Fibroblast growth factor receptor 1 (FGFR1) from Homo sapiens (Human).